A 318-amino-acid polypeptide reads, in one-letter code: Ribose-phosphate pyrophosphokinase 2 (318 aa).

Mg(2+) contacts are provided by Asp-132, His-134, His-143, and Asp-147.

Belongs to the ribose-phosphate pyrophosphokinase family.

Its subcellular location is the cytoplasm. The enzyme catalyses D-ribose 5-phosphate + ATP = 5-phospho-alpha-D-ribose 1-diphosphate + AMP + H(+). Its pathway is metabolic intermediate biosynthesis; 5-phospho-alpha-D-ribose 1-diphosphate biosynthesis; 5-phospho-alpha-D-ribose 1-diphosphate from D-ribose 5-phosphate (route I): step 1/1. Functionally, 5-phosphoribose 1-diphosphate synthase involved in nucleotide, histidine, and tryptophan biosynthesis. Active in heteromultimeric complexes with other 5-phosphoribose 1-diphosphate synthases (PRS2, PRS3, PRS4 and PRS5). The protein is Ribose-phosphate pyrophosphokinase 2 (PRS2) of Saccharomyces cerevisiae (strain ATCC 204508 / S288c) (Baker's yeast).